Here is a 93-residue protein sequence, read N- to C-terminus: Large ribosomal subunit protein uL23 (93 aa).

Belongs to the universal ribosomal protein uL23 family. In terms of assembly, part of the 50S ribosomal subunit. Contacts protein L29, and trigger factor when it is bound to the ribosome.

Functionally, one of the early assembly proteins it binds 23S rRNA. One of the proteins that surrounds the polypeptide exit tunnel on the outside of the ribosome. Forms the main docking site for trigger factor binding to the ribosome. The chain is Large ribosomal subunit protein uL23 from Campylobacter fetus subsp. fetus (strain 82-40).